Reading from the N-terminus, the 406-residue chain is Transcriptional activator NprA (406 aa).

TPR repeat units lie at residues 125-158, 206-239, 246-279, and 285-318; these read YYYY…FRSQ, AECH…AQII, GTIE…KRNS, and FITL…LKRE.

In terms of biological role, activates the transcription of nprS by about five fold. May bind to the upstream region of nprS promoter. In Geobacillus stearothermophilus (Bacillus stearothermophilus), this protein is Transcriptional activator NprA (nprA).